Reading from the N-terminus, the 200-residue chain is Probable GTP-binding protein EngB (200 aa).

The EngB-type G domain occupies G22–Y195. GTP is bound by residues G30 to S37, G57 to L61, D75 to G78, T142 to D145, and F174 to S176. Mg(2+)-binding residues include S37 and T59.

The protein belongs to the TRAFAC class TrmE-Era-EngA-EngB-Septin-like GTPase superfamily. EngB GTPase family. The cofactor is Mg(2+).

Its function is as follows. Necessary for normal cell division and for the maintenance of normal septation. This is Probable GTP-binding protein EngB from Clostridium acetobutylicum (strain ATCC 824 / DSM 792 / JCM 1419 / IAM 19013 / LMG 5710 / NBRC 13948 / NRRL B-527 / VKM B-1787 / 2291 / W).